The chain runs to 179 residues: Acireductone dioxygenase (179 aa).

His97, His99, Glu103, and His141 together coordinate Fe(2+). Residues His97, His99, Glu103, and His141 each coordinate Ni(2+).

It belongs to the acireductone dioxygenase (ARD) family. As to quaternary structure, monomer. Requires Fe(2+) as cofactor. Ni(2+) is required as a cofactor.

It catalyses the reaction 1,2-dihydroxy-5-(methylsulfanyl)pent-1-en-3-one + O2 = 3-(methylsulfanyl)propanoate + CO + formate + 2 H(+). The catalysed reaction is 1,2-dihydroxy-5-(methylsulfanyl)pent-1-en-3-one + O2 = 4-methylsulfanyl-2-oxobutanoate + formate + 2 H(+). It participates in amino-acid biosynthesis; L-methionine biosynthesis via salvage pathway; L-methionine from S-methyl-5-thio-alpha-D-ribose 1-phosphate: step 5/6. Catalyzes 2 different reactions between oxygen and the acireductone 1,2-dihydroxy-3-keto-5-methylthiopentene (DHK-MTPene) depending upon the metal bound in the active site. Fe-containing acireductone dioxygenase (Fe-ARD) produces formate and 2-keto-4-methylthiobutyrate (KMTB), the alpha-ketoacid precursor of methionine in the methionine recycle pathway. Ni-containing acireductone dioxygenase (Ni-ARD) produces methylthiopropionate, carbon monoxide and formate, and does not lie on the methionine recycle pathway. The sequence is that of Acireductone dioxygenase from Gluconacetobacter diazotrophicus (strain ATCC 49037 / DSM 5601 / CCUG 37298 / CIP 103539 / LMG 7603 / PAl5).